The primary structure comprises 468 residues: Beta-monoglucosyldiacylglycerol synthase (468 aa).

A run of 4 helical transmembrane segments spans residues 51–71, 72–92, 358–378, and 387–407; these read AALVLTIVWSGTIALHLVSWG, SIFILGLTTVLGIHALGVVFA, MLMFMLTMYILPTAAIPDLLM, and MLGPVTGLSVTMSVVGMFAGL.

Belongs to the glycosyltransferase 2 family. Mg(2+) serves as cofactor.

It localises to the membrane. It carries out the reaction a 1,2-diacyl-sn-glycerol + UDP-alpha-D-glucose = a 1,2-diacyl-3-O-(beta-D-glucopyranosyl)-sn-glycerol + UDP + H(+). Glucosyltransferase involved in the biosynthesis of the non-bilayer-forming membrane lipid beta-monoglucosyldiacylglycerol which contributes to regulate the properties and stability of the membrane. Catalyzes the transfer of a glucosyl residue from UDP-Glc to diacylglycerol (DAG) acceptor to form the corresponding beta-glucosyl-DAG (1,2-diacyl-3-O-(beta-D-glucopyranosyl)-sn-glycerol). It can only use UDP-Glc as sugar donor. Two types of DAG (dipalmitoyl-DAG (DPDAG) and 1-oleoyl-2-palmitoyl-DAG (OPDAG)) can be used as sugar acceptors, but OPDAG is preferred. The polypeptide is Beta-monoglucosyldiacylglycerol synthase (Nostoc sp. (strain PCC 7120 / SAG 25.82 / UTEX 2576)).